The following is a 926-amino-acid chain: UvrABC system protein A (926 aa).

Position 31–38 (31–38) interacts with ATP; the sequence is GPSGSGKS. The segment at 251–278 adopts a C4-type zinc-finger fold; sequence CPEHGFSIPELSARLFSFNSPYGACPSC. ABC transporter domains follow at residues 308-568 and 588-916; these read SGYF…PSSL and PSGK…KYLR. 620–627 is a binding site for ATP; it reads GVSGSGKS. Residues 719–745 form a C4-type zinc finger; the sequence is CEACQGEGVIKVEMHFLPPVYVTCEVC.

This sequence belongs to the ABC transporter superfamily. UvrA family. As to quaternary structure, forms a heterotetramer with UvrB during the search for lesions.

It localises to the cytoplasm. In terms of biological role, the UvrABC repair system catalyzes the recognition and processing of DNA lesions. UvrA is an ATPase and a DNA-binding protein. A damage recognition complex composed of 2 UvrA and 2 UvrB subunits scans DNA for abnormalities. When the presence of a lesion has been verified by UvrB, the UvrA molecules dissociate. This chain is UvrABC system protein A, found in Aquifex aeolicus (strain VF5).